The chain runs to 53 residues: Large ribosomal subunit protein eL40 (53 aa).

The protein belongs to the eukaryotic ribosomal protein eL40 family.

The chain is Large ribosomal subunit protein eL40 from Staphylothermus marinus (strain ATCC 43588 / DSM 3639 / JCM 9404 / F1).